The following is a 572-amino-acid chain: Proline--tRNA ligase (572 aa).

It belongs to the class-II aminoacyl-tRNA synthetase family. ProS type 1 subfamily. In terms of assembly, homodimer.

It is found in the cytoplasm. It carries out the reaction tRNA(Pro) + L-proline + ATP = L-prolyl-tRNA(Pro) + AMP + diphosphate. Its function is as follows. Catalyzes the attachment of proline to tRNA(Pro) in a two-step reaction: proline is first activated by ATP to form Pro-AMP and then transferred to the acceptor end of tRNA(Pro). As ProRS can inadvertently accommodate and process non-cognate amino acids such as alanine and cysteine, to avoid such errors it has two additional distinct editing activities against alanine. One activity is designated as 'pretransfer' editing and involves the tRNA(Pro)-independent hydrolysis of activated Ala-AMP. The other activity is designated 'posttransfer' editing and involves deacylation of mischarged Ala-tRNA(Pro). The misacylated Cys-tRNA(Pro) is not edited by ProRS. This is Proline--tRNA ligase from Psychrobacter cryohalolentis (strain ATCC BAA-1226 / DSM 17306 / VKM B-2378 / K5).